The primary structure comprises 868 residues: Cytosolic phospholipase A2 epsilon (868 aa).

Positions 1-46 (MSLQASEGCPGLGTNVFVPQSPQTDEEGSRSGRSFSEFEDTQDLDT) are disordered. The 125-residue stretch at 46–170 (TPGLPPFCPM…CFRKKTHVKF (125 aa)) folds into the C2 domain. Residues aspartate 84, aspartate 90, aspartate 140, aspartate 142, and aspartate 148 each contribute to the Ca(2+) site. Residues 324 to 856 (PCPETLDVRL…TLLQALRLAV (533 aa)) enclose the PLA2c domain. Serine 412 serves as the catalytic Nucleophile. Aspartate 700 (proton acceptor) is an active-site residue. At serine 800 the chain carries Phosphoserine. Positions 857-868 (EKKKRLKGQCPS) are required for localization at membrane structures.

Ca(2+) serves as cofactor.

The protein resides in the cytoplasm. It is found in the cytosol. It localises to the early endosome membrane. The protein localises to the lysosome membrane. Its subcellular location is the cell membrane. The enzyme catalyses a 1,2-diacyl-sn-glycero-3-phosphoethanolamine + a 1,2-diacyl-sn-glycero-3-phosphocholine = an N-acyl-1,2-diacyl-sn-glycero-3-phosphoethanolamine + a 2-acyl-sn-glycero-3-phosphocholine + H(+). The catalysed reaction is 1-hexadecanoyl-2-octadecanoyl-sn-glycero-3-phosphocholine + 1,2-di-(9Z-octadecenoyl)-sn-glycero-3-phosphoethanolamine = 2-octadecanoyl-sn-glycero-3-phosphocholine + N-hexadecanoyl-1,2-di-(9Z-octadecenoyl)-sn-glycero-3-phosphoethanolamine + H(+). It carries out the reaction 1-octadecanoyl-2-hexadecanoyl-sn-glycero-3-phosphocholine + 1,2-di-(9Z-octadecenoyl)-sn-glycero-3-phosphoethanolamine = N-octadecanoyl-1,2-di-(9Z-octadecenoyl)-sn-glycero-3-phosphoethanolamine + 2-hexadecanoyl-sn-glycero-3-phosphocholine + H(+). It catalyses the reaction 1,2-di-(9Z-octadecenoyl)-sn-glycero-3-phosphoethanolamine + 1,2-dihexadecanoyl-sn-glycero-3-phosphocholine = N-hexadecanoyl-1,2-di-(9Z-octadecenoyl)-sn-glycero-3-phosphoethanolamine + 2-hexadecanoyl-sn-glycero-3-phosphocholine + H(+). The enzyme catalyses 1,2-di-(5Z,8Z,11Z,14Z-eicosatetraenoyl)-sn-glycero-3-phosphocholine + 1,2-di-(9Z-octadecenoyl)-sn-glycero-3-phosphoethanolamine = N-(5Z,8Z,11Z,14Z-eicosatetraenoyl)-1,2-di-(9Z-octadecenoyl)-sn-glycero-3-phosphoethanolamine + 2-(5Z,8Z,11Z,14Z)-eicosatetraenoyl-sn-glycero-3-phosphocholine + H(+). The catalysed reaction is 2 1,2-di-(9Z-octadecenoyl)-sn-glycero-3-phosphoethanolamine = N,1,2-tri-(9Z-octadecenoyl)-sn-glycero-3-phosphoethanolamine + 2-(9Z-octadecenoyl)-sn-glycero-3-phosphoethanolamine + H(+). It carries out the reaction 1-(1Z-octadecenyl)-2-(9Z-octadecenoyl)-sn-glycero-3-phosphoethanolamine + 1,2-dihexadecanoyl-sn-glycero-3-phosphocholine = 1-O-(1Z-octadecenoyl)-2-(9Z-octadecenoyl)-sn-glycero-3-phospho-N-hexadecanoyl-ethanolamine + 2-hexadecanoyl-sn-glycero-3-phosphocholine + H(+). It catalyses the reaction a 1,2-diacyl-sn-glycero-3-phosphocholine + H2O = a 1-acyl-sn-glycero-3-phosphocholine + a fatty acid + H(+). The enzyme catalyses 1-hexadecanoyl-2-(5Z,8Z,11Z,14Z-eicosatetraenoyl)-sn-glycero-3-phosphocholine + H2O = 1-hexadecanoyl-sn-glycero-3-phosphocholine + (5Z,8Z,11Z,14Z)-eicosatetraenoate + H(+). The catalysed reaction is 1-hexadecanoyl-sn-glycero-3-phosphocholine + H2O = sn-glycerol 3-phosphocholine + hexadecanoate + H(+). Its activity is regulated as follows. Stimulated by cytosolic Ca(2+). Stimulated by anionic phospholipids such as phosphatidylserines, phosphatidates and phosphatidylinositols. Calcium-dependent N-acyltransferase involved in the biosynthesis of N-acyl ethanolamines (NAEs) in the brain. Transfers the sn-1 fatty acyl chain of phosphatidylcholine (fatty acyl donor) to the amine group of phosphatidylethanolamine (fatty acyl acceptor) to generate N-acyl phosphatidylethanolamine (NAPE). Similarly can use plasmenylethanolamine as a fatty acyl acceptor to form N-acyl plasmenylethanolamine (N-Acyl-PlsEt). Both NAPE and N-Acyl-PlsEt can serve as precursors of bioactive NAEs like N-arachidonoyl phosphatidylethanolamine also called anandamide. Has weak phospholipase A2 and lysophospholipase activities. Regulates intracellular membrane trafficking that requires modulation of membrane curvature as it occurs by enrichment in lysophospholipids. Promotes tubule formation involved in clathrin-independent endocytotic trafficking and cargo recycling. The polypeptide is Cytosolic phospholipase A2 epsilon (Homo sapiens (Human)).